A 332-amino-acid polypeptide reads, in one-letter code: MTVTVSQVLRPRGPQIERLTENRAKVVLEPLGRGYAHTLGNALRRVLLSSIPGFAITEVEIDGVLHEYTTVEGLQEDVLEVLLNLKDVAIRIHSGDTATLSLFKQGAGVVTAADIKTDHNVEIINDGHVICHLTKDTTINMRLKIERGFGYQPAVVRRRPDDENRTIGRLILDASFSPVRRVAYVVEAARVEQRTDLDKLIIDIETNGTIDAEEALRTAADILTDQLSVFGDFTHRDRGTVKPASSGVDPVLLRPIDDLELTVRSANCLKAESIYYIGDLIQKTEVELLKTPNLGKKSLTEIKEVLGQRGLGLGVKLENWPPPGVSQYGMLG.

Positions 1 to 234 (MTVTVSQVLR…DQLSVFGDFT (234 aa)) are alpha N-terminal domain (alpha-NTD). Residues 248 to 332 (VDPVLLRPID…PGVSQYGMLG (85 aa)) form an alpha C-terminal domain (alpha-CTD) region.

This sequence belongs to the RNA polymerase alpha chain family. In terms of assembly, homodimer. The RNAP catalytic core consists of 2 alpha, 1 beta, 1 beta' and 1 omega subunit. When a sigma factor is associated with the core the holoenzyme is formed, which can initiate transcription.

It catalyses the reaction RNA(n) + a ribonucleoside 5'-triphosphate = RNA(n+1) + diphosphate. Its function is as follows. DNA-dependent RNA polymerase catalyzes the transcription of DNA into RNA using the four ribonucleoside triphosphates as substrates. The sequence is that of DNA-directed RNA polymerase subunit alpha from Xylella fastidiosa (strain M23).